A 118-amino-acid polypeptide reads, in one-letter code: NADH dehydrogenase [ubiquinone] iron-sulfur protein 5-A (118 aa).

Residues 46-87 (KGRCYDFWMDFSECMSHCREPKDCTLLREDYLECLHHSKEFQ) enclose the CHCH domain. Short sequence motifs (cx9C motif) lie at residues 49-59 (CYDFWMDFSEC) and 69-79 (CTLLREDYLEC). Disulfide bonds link C49–C79 and C59–C69. The tract at residues 98 to 118 (RKLRAASRKGEEAGDGTHNHH) is disordered.

It belongs to the complex I NDUFS5 subunit family. In terms of assembly, complex I is composed of at least 49 different subunits. This is a component of the iron-sulfur (IP) fragment of the enzyme.

Its subcellular location is the mitochondrion. It is found in the mitochondrion inner membrane. The protein localises to the mitochondrion intermembrane space. Its function is as follows. Accessory subunit of the mitochondrial membrane respiratory chain NADH dehydrogenase (Complex I), that is believed not to be involved in catalysis. Complex I functions in the transfer of electrons from NADH to the respiratory chain. The immediate electron acceptor for the enzyme is believed to be ubiquinone. This Arabidopsis thaliana (Mouse-ear cress) protein is NADH dehydrogenase [ubiquinone] iron-sulfur protein 5-A.